A 431-amino-acid chain; its full sequence is Polygalacturonase ADPG1 (431 aa).

Positions 1–23 are cleaved as a signal peptide; sequence MARCCRHLAVFLCVLLMLSLCKA. PbH1 repeat units lie at residues 223-249 and 250-271; these read CNKV…HITN and TQNI…SIED. Residue aspartate 264 is the Proton donor of the active site. Histidine 287 is a catalytic residue. PbH1 repeat units follow at residues 303 to 324, 332 to 353, and 398 to 420; these read VSGI…RIKT, AKNI…IIDQ, and CQGI…NANV.

The protein belongs to the glycosyl hydrolase 28 family. In terms of tissue distribution, expressed in flower buds and siliques, in the dehiscence zone of anthers (stomium cells) and maturing siliques. Expressed in stigma during pollen tube growth. Not expressed in seeds or in the floral part or leaf abscission zone but found at the junction between the seed and the funiculus at the site of seed abscission.

The protein resides in the secreted. Its subcellular location is the cell wall. It is found in the cytoplasm. The catalysed reaction is (1,4-alpha-D-galacturonosyl)n+m + H2O = (1,4-alpha-D-galacturonosyl)n + (1,4-alpha-D-galacturonosyl)m.. In terms of biological role, polygalacturonase involved in cell separation in the final stages of pod shatter and in anther dehiscence. Not involved in floral organ abscission. This is Polygalacturonase ADPG1 (ADPG1) from Arabidopsis thaliana (Mouse-ear cress).